Reading from the N-terminus, the 432-residue chain is Amino-acid acetyltransferase (432 aa).

Residues E286–S425 form the N-acetyltransferase domain.

It belongs to the acetyltransferase family. ArgA subfamily.

It localises to the cytoplasm. It catalyses the reaction L-glutamate + acetyl-CoA = N-acetyl-L-glutamate + CoA + H(+). Its pathway is amino-acid biosynthesis; L-arginine biosynthesis; N(2)-acetyl-L-ornithine from L-glutamate: step 1/4. This Pseudomonas aeruginosa (strain LESB58) protein is Amino-acid acetyltransferase.